We begin with the raw amino-acid sequence, 575 residues long: G2/mitotic-specific cyclin-B3 (575 aa).

The D-box motif lies at 75 to 83 (RSALGNLTN). Serine 215 is modified (phosphoserine).

It belongs to the cyclin family. Cyclin AB subfamily. In terms of assembly, interacts with Cdk1 kinase. In terms of processing, ubiquitinated. Ubiquitination leads to its degradation in early anaphase. In embryo, it is expressed in all mitotically proliferating cells, with a high level in neuroblasts. Not expressed in old embryos and thereafter. Not expressed in endoreplicating tissues.

It is found in the nucleus. Its function is as follows. Cyclins are positive regulatory subunits of the cyclin-dependent kinases (CDKs), and thereby play an essential role in the control of the cell cycle, notably via their destruction during cell division. Probably functions redundantly with other cyclins in regulation of cell cycle. Its presence may be required to delay a deadline for completing cytokinesis that is ordinary imposed by nuclear envelope reformation. Degradation of CycB and CycB3 promote cytokinesis furrow initiation and ingression. Required with CycB for female fertility. This chain is G2/mitotic-specific cyclin-B3 (CycB3), found in Drosophila melanogaster (Fruit fly).